Here is a 101-residue protein sequence, read N- to C-terminus: NADH-quinone oxidoreductase subunit K (101 aa).

The next 3 helical transmembrane spans lie at 4 to 24 (LTHY…GIFM), 30 to 50 (LVLL…FIAF), and 61 to 81 (IFVF…LAIM).

This sequence belongs to the complex I subunit 4L family. In terms of assembly, NDH-1 is composed of 14 different subunits. Subunits NuoA, H, J, K, L, M, N constitute the membrane sector of the complex.

Its subcellular location is the cell inner membrane. The enzyme catalyses a quinone + NADH + 5 H(+)(in) = a quinol + NAD(+) + 4 H(+)(out). Functionally, NDH-1 shuttles electrons from NADH, via FMN and iron-sulfur (Fe-S) centers, to quinones in the respiratory chain. The immediate electron acceptor for the enzyme in this species is believed to be ubiquinone. Couples the redox reaction to proton translocation (for every two electrons transferred, four hydrogen ions are translocated across the cytoplasmic membrane), and thus conserves the redox energy in a proton gradient. The protein is NADH-quinone oxidoreductase subunit K of Neisseria meningitidis serogroup B (strain ATCC BAA-335 / MC58).